We begin with the raw amino-acid sequence, 87 residues long: Phosphoribosyl-ATP pyrophosphatase (87 aa).

It belongs to the PRA-PH family.

The protein resides in the cytoplasm. The enzyme catalyses 1-(5-phospho-beta-D-ribosyl)-ATP + H2O = 1-(5-phospho-beta-D-ribosyl)-5'-AMP + diphosphate + H(+). Its pathway is amino-acid biosynthesis; L-histidine biosynthesis; L-histidine from 5-phospho-alpha-D-ribose 1-diphosphate: step 2/9. The chain is Phosphoribosyl-ATP pyrophosphatase from Saccharopolyspora erythraea (strain ATCC 11635 / DSM 40517 / JCM 4748 / NBRC 13426 / NCIMB 8594 / NRRL 2338).